The primary structure comprises 438 residues: Coenzyme A disulfide reductase (438 aa).

8-33 (GAVAGGATCASQIRRLDKESDIIIFE) is an FAD binding site. Residues threonine 15, glutamine 19, arginine 22, serine 39, and asparagine 42 each contribute to the substrate site. Cysteine 43 (nucleophile) is an active-site residue. Cysteine 43 serves as the catalytic Redox-active. Lysine 71 contributes to the substrate binding site. Position 151–166 (151–166 (VLVVGAGYVSLEVLEN)) interacts with NADP(+). 267-277 (TNVPNIYAIGD) serves as a coordination point for FAD. Residue histidine 299 coordinates substrate. An FAD-binding site is contributed by tyrosine 419. Residue lysine 427 participates in substrate binding.

Belongs to the class-III pyridine nucleotide-disulfide oxidoreductase family. Homodimer. FAD serves as cofactor.

The enzyme catalyses NADP(+) + 2 CoA = CoA-disulfide + NADPH + H(+). In terms of biological role, catalyzes specifically the NADPH-dependent reduction of coenzyme A disulfide. The protein is Coenzyme A disulfide reductase of Staphylococcus aureus (strain COL).